The primary structure comprises 405 residues: Tryptophan synthase beta chain (405 aa).

Position 98 is an N6-(pyridoxal phosphate)lysine (K98).

It belongs to the TrpB family. Tetramer of two alpha and two beta chains. Pyridoxal 5'-phosphate serves as cofactor.

The enzyme catalyses (1S,2R)-1-C-(indol-3-yl)glycerol 3-phosphate + L-serine = D-glyceraldehyde 3-phosphate + L-tryptophan + H2O. It functions in the pathway amino-acid biosynthesis; L-tryptophan biosynthesis; L-tryptophan from chorismate: step 5/5. In terms of biological role, the beta subunit is responsible for the synthesis of L-tryptophan from indole and L-serine. In Stenotrophomonas maltophilia (strain K279a), this protein is Tryptophan synthase beta chain.